The sequence spans 291 residues: Putative carboxymethylenebutenolidase (291 aa).

Residues 1-40 (MTAFDADLRSLAAQTTLSRRTVIATSLATGFALAVQPVAA) form the signal peptide. Catalysis depends on residues cysteine 170, aspartate 227, and histidine 259.

The protein belongs to the dienelactone hydrolase family.

It catalyses the reaction 2-(5-oxo-2,5-dihydrofuran-2-ylidene)acetate + H2O = 4-oxohex-2-enedioate + H(+). This Methylorubrum extorquens (strain ATCC 14718 / DSM 1338 / JCM 2805 / NCIMB 9133 / AM1) (Methylobacterium extorquens) protein is Putative carboxymethylenebutenolidase.